The following is a 458-amino-acid chain: Gamma aminobutyrate transaminase 2 (458 aa).

114–115 (GS) provides a ligand contact to pyridoxal 5'-phosphate. A substrate-binding site is contributed by Tyr147. Residue Asp254 participates in pyridoxal 5'-phosphate binding. Lys283 lines the substrate pocket. An N6-(pyridoxal phosphate)lysine modification is found at Lys283.

Belongs to the class-III pyridoxal-phosphate-dependent aminotransferase family. As to expression, expressed in leaves, roots, stems, flowers and fruits. Expressed in carpels, but not in stamens.

It is found in the cytoplasm. The catalysed reaction is 4-aminobutanoate + pyruvate = succinate semialdehyde + L-alanine. It catalyses the reaction 4-aminobutanoate + glyoxylate = succinate semialdehyde + glycine. In terms of biological role, transaminase that degrades gamma-amino butyric acid (GABA) and uses pyruvate or glyoxylate as amino-group acceptor. Cannot use beta-alanine, ornithine, acetylornithine, serine, glycine, asparagine, glutamine, glutamate, valine, leucine, isoleucine, methionine, phenylalanine, histidine, lysine, arginine, aspartate, threonine, tyrosine, tryptophan, proline, or cysteine as amino donors. May be responsible for establishing the GABA gradient in the carpel. The protein is Gamma aminobutyrate transaminase 2 (GABA-TP2) of Solanum lycopersicum (Tomato).